The chain runs to 302 residues: 33 kDa chaperonin (302 aa).

Cystine bridges form between Cys247–Cys249 and Cys280–Cys283.

The protein belongs to the HSP33 family. Post-translationally, under oxidizing conditions two disulfide bonds are formed involving the reactive cysteines. Under reducing conditions zinc is bound to the reactive cysteines and the protein is inactive.

The protein resides in the cytoplasm. Redox regulated molecular chaperone. Protects both thermally unfolding and oxidatively damaged proteins from irreversible aggregation. Plays an important role in the bacterial defense system toward oxidative stress. The protein is 33 kDa chaperonin of Prochlorococcus marinus (strain AS9601).